Consider the following 360-residue polypeptide: MVEPANTVGLPVNPTPLLKDELDIVIPTIRNLDFLEMWRPFLQPYHLIIVQDGDPSKKIHVPEGYDYELYNRNDINRILGPKASCISFKDSACRCFGYMVSKKKYIFTIDDDCFVAKDPSGKAVNALEQHIKNLLCPSSPFFFNTLYDPYREGADFVRGYPFSLREGVSTAVSHGLWLNIPDYDAPTQLVKPKERNTRYVDAVMTIPKGTLFPMCGMNLAFDRDLIGPAMYFGLMGDGQPIGRYDDMWAGWCIKVICDHLSLGVKTGLPYIYHSKASNPFVNLKKEYKGIFWQEEIIPFFQNAKLSKEAVTVQQCYIELSKMVKEKLSSLDPYFDKLADAMVTWIEAWDELNPPAASGKA.

An N-acetylvaline modification is found at V2. Residues 110-112 (DDD) carry the DXD motif motif. A glycan (N-linked (Glc...) arginine) is linked at R158.

The protein belongs to the RGP family. Heteromers with RGP1, RGP4 and RGP5. It depends on Mn(2+) as a cofactor. The cofactor is Mg(2+). Post-translationally, reversibly glycosylated in vitro by UDP-glucose, UDP-xylose and UDP-galactose, but not UDP-mannose. In terms of tissue distribution, predominantly expressed in shoot and root apical meristems. Expressed in epidermal cells of leaves, inflorescence stems and seed coat. Expressed in pollen.

The protein localises to the cytoplasm. It localises to the cytosol. Its subcellular location is the golgi apparatus. It carries out the reaction UDP-beta-L-arabinofuranose = UDP-beta-L-arabinopyranose. In terms of biological role, UDP-L-arabinose mutase involved in the biosynthesis of cell wall non-cellulosic polysaccharides. Catalyzes the interconvertion of UDP-L-arabinopyranose (UDP-Arap) and UDP-L-arabinofuranose (UDP-Araf) in vitro. Preferentially catalyzes the formation of UDP-Arap from UDP-Araf. At thermodynamic equilibrium in vitro the ratio of the pyranose form over the furanose form is 95:5. Is not active on other UDP-sugars (UDP-Gal, UDP-Xyl, UDP-Glc, GDP-Man and GDP-Fuc). Functions redundantly with RGP2 and is essential for proper cell walls and pollen development. Probably involved in the formation of the pectocellulosic cell wall layer intine. Is probably active as heteromer in vivo. The polypeptide is UDP-arabinopyranose mutase 2 (Arabidopsis thaliana (Mouse-ear cress)).